The chain runs to 226 residues: UPF0173 metal-dependent hydrolase Dgeo_0136 (226 aa).

This sequence belongs to the UPF0173 family.

This chain is UPF0173 metal-dependent hydrolase Dgeo_0136, found in Deinococcus geothermalis (strain DSM 11300 / CIP 105573 / AG-3a).